A 758-amino-acid polypeptide reads, in one-letter code: 5-methyltetrahydropteroyltriglutamate--homocysteine methyltransferase (758 aa).

5-methyltetrahydropteroyltri-L-glutamate-binding positions include 16–19 and K117; that span reads RELK. L-homocysteine contacts are provided by residues 436–438 and E489; that span reads IGS. Residues 436–438 and E489 each bind L-methionine; that span reads IGS. Residues 520–521 and W566 each bind 5-methyltetrahydropteroyltri-L-glutamate; that span reads RC. Residue D604 coordinates L-homocysteine. D604 contributes to the L-methionine binding site. E610 lines the 5-methyltetrahydropteroyltri-L-glutamate pocket. The Zn(2+) site is built by H646, C648, and E670. The Proton donor role is filled by H699. Residue C731 participates in Zn(2+) binding.

The protein belongs to the vitamin-B12 independent methionine synthase family. It depends on Zn(2+) as a cofactor.

The catalysed reaction is 5-methyltetrahydropteroyltri-L-glutamate + L-homocysteine = tetrahydropteroyltri-L-glutamate + L-methionine. Its pathway is amino-acid biosynthesis; L-methionine biosynthesis via de novo pathway; L-methionine from L-homocysteine (MetE route): step 1/1. Catalyzes the transfer of a methyl group from 5-methyltetrahydrofolate to homocysteine resulting in methionine formation. This is 5-methyltetrahydropteroyltriglutamate--homocysteine methyltransferase from Ruthia magnifica subsp. Calyptogena magnifica.